A 117-amino-acid polypeptide reads, in one-letter code: Ribosome-binding factor A (117 aa).

It belongs to the RbfA family. As to quaternary structure, monomer. Binds 30S ribosomal subunits, but not 50S ribosomal subunits or 70S ribosomes.

The protein localises to the cytoplasm. Its function is as follows. One of several proteins that assist in the late maturation steps of the functional core of the 30S ribosomal subunit. Associates with free 30S ribosomal subunits (but not with 30S subunits that are part of 70S ribosomes or polysomes). Required for efficient processing of 16S rRNA. May interact with the 5'-terminal helix region of 16S rRNA. In Leptospira interrogans serogroup Icterohaemorrhagiae serovar Lai (strain 56601), this protein is Ribosome-binding factor A.